Here is a 143-residue protein sequence, read N- to C-terminus: MGKYNRILALDLGIKTCGFAISDQNWKISYPLEQFNFNRYDFASVISRIAFWMKEYPISILVLGYPLTLAGKISPRTKMVEYFADLVKKNYEIKVVFQDERLTTKQAQTFLLDLGISFKKRQKVIDKLAAQIILERFLNTKKG.

This sequence belongs to the YqgF nuclease family.

The protein resides in the cytoplasm. Functionally, could be a nuclease involved in processing of the 5'-end of pre-16S rRNA. In Mesomycoplasma hyopneumoniae (strain 232) (Mycoplasma hyopneumoniae), this protein is Putative pre-16S rRNA nuclease.